The following is a 201-amino-acid chain: MLTAQQIEKLDWEKVAYMMPVIVQHAISGDVLMMGYMNKEALNITISSGKITFFSRSKQRLWTKGESSGHFLNLVNIYPDCDNDTLLALADPIGPTCHFGTHSCFAPAQTEWGFLYQLEKLLASRKTADPDHSYTAKLYASGTKRIAQKVGEEGLETALAAAVNNREELTNEAADLMYHLMVLLQDQELDLSCVIRRLRER.

A phosphoribosyl-AMP cyclohydrolase region spans residues 1 to 114; that stretch reads MLTAQQIEKL…FAPAQTEWGF (114 aa). The tract at residues 115-201 is phosphoribosyl-ATP pyrophosphohydrolase; sequence LYQLEKLLAS…SCVIRRLRER (87 aa).

It in the N-terminal section; belongs to the PRA-CH family. The protein in the C-terminal section; belongs to the PRA-PH family.

The protein resides in the cytoplasm. It catalyses the reaction 1-(5-phospho-beta-D-ribosyl)-ATP + H2O = 1-(5-phospho-beta-D-ribosyl)-5'-AMP + diphosphate + H(+). The enzyme catalyses 1-(5-phospho-beta-D-ribosyl)-5'-AMP + H2O = 1-(5-phospho-beta-D-ribosyl)-5-[(5-phospho-beta-D-ribosylamino)methylideneamino]imidazole-4-carboxamide. It participates in amino-acid biosynthesis; L-histidine biosynthesis; L-histidine from 5-phospho-alpha-D-ribose 1-diphosphate: step 2/9. It functions in the pathway amino-acid biosynthesis; L-histidine biosynthesis; L-histidine from 5-phospho-alpha-D-ribose 1-diphosphate: step 3/9. The chain is Histidine biosynthesis bifunctional protein HisIE from Photorhabdus laumondii subsp. laumondii (strain DSM 15139 / CIP 105565 / TT01) (Photorhabdus luminescens subsp. laumondii).